The primary structure comprises 155 residues: Interleukin-2 (155 aa).

A signal peptide spans 1–20; that stretch reads MYKMQLLSCIALTLVLVANS. O-linked (GalNAc...) threonine glycosylation is present at Thr-24. An intrachain disulfide couples Cys-79 to Cys-127. N-linked (GlcNAc...) asparagine glycosylation is present at Asn-112.

The protein belongs to the IL-2 family.

Its subcellular location is the secreted. Its function is as follows. Cytokine produced by activated CD4-positive helper T-cells and to a lesser extend activated CD8-positive T-cells and natural killer (NK) cells that plays pivotal roles in the immune response and tolerance. Binds to a receptor complex composed of either the high-affinity trimeric IL-2R (IL2RA/CD25, IL2RB/CD122 and IL2RG/CD132) or the low-affinity dimeric IL-2R (IL2RB and IL2RG). Interaction with the receptor leads to oligomerization and conformation changes in the IL-2R subunits resulting in downstream signaling starting with phosphorylation of JAK1 and JAK3. In turn, JAK1 and JAK3 phosphorylate the receptor to form a docking site leading to the phosphorylation of several substrates including STAT5. This process leads to activation of several pathways including STAT, phosphoinositide-3-kinase/PI3K and mitogen-activated protein kinase/MAPK pathways. Functions as a T-cell growth factor and can increase NK-cell cytolytic activity as well. Promotes strong proliferation of activated B-cells and subsequently immunoglobulin production. Plays a pivotal role in regulating the adaptive immune system by controlling the survival and proliferation of regulatory T-cells, which are required for the maintenance of immune tolerance. Moreover, participates in the differentiation and homeostasis of effector T-cell subsets, including Th1, Th2, Th17 as well as memory CD8-positive T-cells. The protein is Interleukin-2 (IL2) of Canis lupus familiaris (Dog).